A 188-amino-acid polypeptide reads, in one-letter code: UPF0301 protein Cag_1601 (188 aa).

The protein belongs to the UPF0301 (AlgH) family.

This chain is UPF0301 protein Cag_1601, found in Chlorobium chlorochromatii (strain CaD3).